A 467-amino-acid chain; its full sequence is Retinoic acid receptor RXR-gamma (467 aa).

Positions 1-142 (MYGNYPHFIK…TSPGSLAKHI (142 aa)) are modulating. 2 NR C4-type zinc fingers span residues 143 to 163 (CAIC…CEGC) and 179 to 203 (CRDN…YQKC). A DNA-binding region (nuclear receptor) is located at residues 143 to 208 (CAICGDRSSG…RYQKCLAMGM (66 aa)). Residues 209–232 (KREAVQEERQGSRERSENEAESTS) are hinge. Positions 214–226 (QEERQGSRERSEN) are enriched in basic and acidic residues. A disordered region spans residues 214 to 237 (QEERQGSRERSENEAESTSGGSED). The NR LBD domain maps to 235 to 463 (SEDMPVERIL…TFLMEMLETP (229 aa)).

This sequence belongs to the nuclear hormone receptor family. NR2 subfamily. Homodimer. Heterodimer; with a RAR molecule. Binds DNA preferentially as a RAR/RXR heterodimer. In terms of tissue distribution, isoform 1 is highly expressed inliver. Isoform 2 is abundantly expressed in eye and dorsal root ganglia.

It is found in the nucleus. Receptor for retinoic acid. Retinoic acid receptors bind as heterodimers to their target response elements in response to their ligands, all-trans or 9-cis retinoic acid, and regulate gene expression in various biological processes. The RAR/RXR heterodimers bind to the retinoic acid response elements (RARE) composed of tandem 5'-AGGTCA-3' sites known as DR1-DR5. The high affinity ligand for RXRs is 9-cis retinoic acid. The sequence is that of Retinoic acid receptor RXR-gamma (RXRG) from Gallus gallus (Chicken).